We begin with the raw amino-acid sequence, 217 residues long: 3,4-dihydroxy-2-butanone 4-phosphate synthase (217 aa).

D-ribulose 5-phosphate contacts are provided by residues 37–38 (RE), Asp-42, 150–154 (RRGHT), and Glu-174. Glu-38 lines the Mg(2+) pocket. His-153 serves as a coordination point for Mg(2+).

It belongs to the DHBP synthase family. In terms of assembly, homodimer. Mg(2+) serves as cofactor. Requires Mn(2+) as cofactor.

The enzyme catalyses D-ribulose 5-phosphate = (2S)-2-hydroxy-3-oxobutyl phosphate + formate + H(+). Its pathway is cofactor biosynthesis; riboflavin biosynthesis; 2-hydroxy-3-oxobutyl phosphate from D-ribulose 5-phosphate: step 1/1. Catalyzes the conversion of D-ribulose 5-phosphate to formate and 3,4-dihydroxy-2-butanone 4-phosphate. This is 3,4-dihydroxy-2-butanone 4-phosphate synthase from Shewanella sp. (strain MR-4).